The chain runs to 256 residues: Probable ATP-dependent transporter slr0075 (256 aa).

The 245-residue stretch at 6–250 (LSIKNLTASV…EEKGYDFLDE (245 aa)) folds into the ABC transporter domain. ATP is bound at residue 38–45 (GRNGSGKS).

Belongs to the ABC transporter superfamily. Ycf16 family.

This Synechocystis sp. (strain ATCC 27184 / PCC 6803 / Kazusa) protein is Probable ATP-dependent transporter slr0075.